A 334-amino-acid polypeptide reads, in one-letter code: Sensor protein BceS (334 aa).

The next 2 helical transmembrane spans lie at 13 to 33 and 35 to 55; these read ILIIIFLQCFTVFIAYLDSAI and LAPVFYSVFLSSMIFLFFLAV. Residues 121-326 form the Histidine kinase domain; that stretch reads AWIHEIKTPL…TFTLTFPKEN (206 aa). Residue His-124 is modified to Phosphohistidine; by autocatalysis.

The protein localises to the cell membrane. The enzyme catalyses ATP + protein L-histidine = ADP + protein N-phospho-L-histidine.. In terms of biological role, member of the two-component regulatory system BceS/BceR involved in the regulation of bacitracin resistance. Activates BceR in response to extracellular bacitracin. In Halalkalibacterium halodurans (strain ATCC BAA-125 / DSM 18197 / FERM 7344 / JCM 9153 / C-125) (Bacillus halodurans), this protein is Sensor protein BceS (bceS).